The primary structure comprises 77 residues: RNA-binding protein Hfq (77 aa).

The 60-residue stretch at 9-68 folds into the Sm domain; sequence DPFLNALRKEHIPVAIYLVNGIKLQGQIESFDQFVILLKNTVSQMVYKHAISTVVPARAI.

This sequence belongs to the Hfq family. In terms of assembly, homohexamer.

Functionally, RNA chaperone that binds small regulatory RNA (sRNAs) and mRNAs to facilitate mRNA translational regulation in response to envelope stress, environmental stress and changes in metabolite concentrations. Also binds with high specificity to tRNAs. This is RNA-binding protein Hfq from Psychromonas ingrahamii (strain DSM 17664 / CCUG 51855 / 37).